Here is a 537-residue protein sequence, read N- to C-terminus: Arginine--tRNA ligase (537 aa).

Positions 113 to 123 match the 'HIGH' region motif; it reads ANPTGRIHLGH.

This sequence belongs to the class-I aminoacyl-tRNA synthetase family. As to quaternary structure, monomer.

It is found in the cytoplasm. The catalysed reaction is tRNA(Arg) + L-arginine + ATP = L-arginyl-tRNA(Arg) + AMP + diphosphate. This is Arginine--tRNA ligase (argS) from Mycoplasma genitalium (strain ATCC 33530 / DSM 19775 / NCTC 10195 / G37) (Mycoplasmoides genitalium).